We begin with the raw amino-acid sequence, 48 residues long: Glycine-rich RNA-binding protein 3 (48 aa).

In Populus euphratica (Euphrates poplar), this protein is Glycine-rich RNA-binding protein 3.